A 392-amino-acid chain; its full sequence is Formate-dependent phosphoribosylglycinamide formyltransferase (392 aa).

N(1)-(5-phospho-beta-D-ribosyl)glycinamide is bound by residues 22 to 23 (EL) and E82. Residues R114, K155, 160-165 (SSGKGQ), 195-198 (EGLV), and E203 contribute to the ATP site. Residues 119 to 308 (RLAAETLGVP…EFALHVRAFL (190 aa)) form the ATP-grasp domain. Mg(2+) contacts are provided by E267 and E279. N(1)-(5-phospho-beta-D-ribosyl)glycinamide is bound by residues D286, K355, and 362–363 (RR).

It belongs to the PurK/PurT family. As to quaternary structure, homodimer.

The enzyme catalyses N(1)-(5-phospho-beta-D-ribosyl)glycinamide + formate + ATP = N(2)-formyl-N(1)-(5-phospho-beta-D-ribosyl)glycinamide + ADP + phosphate + H(+). It participates in purine metabolism; IMP biosynthesis via de novo pathway; N(2)-formyl-N(1)-(5-phospho-D-ribosyl)glycinamide from N(1)-(5-phospho-D-ribosyl)glycinamide (formate route): step 1/1. Its function is as follows. Involved in the de novo purine biosynthesis. Catalyzes the transfer of formate to 5-phospho-ribosyl-glycinamide (GAR), producing 5-phospho-ribosyl-N-formylglycinamide (FGAR). Formate is provided by PurU via hydrolysis of 10-formyl-tetrahydrofolate. This Pectobacterium carotovorum subsp. carotovorum (strain PC1) protein is Formate-dependent phosphoribosylglycinamide formyltransferase.